Here is a 394-residue protein sequence, read N- to C-terminus: L-lactate dehydrogenase (394 aa).

An FMN hydroxy acid dehydrogenase domain is found at 1-380 (MIISAASDYR…SRDSLVQNAE (380 aa)). Tyrosine 24 provides a ligand contact to substrate. FMN contacts are provided by serine 106 and glutamine 127. A substrate-binding site is contributed by tyrosine 129. An FMN-binding site is contributed by threonine 155. Arginine 164 serves as a coordination point for substrate. Lysine 251 is a binding site for FMN. Histidine 275 serves as the catalytic Proton acceptor. Arginine 278 contacts substrate. Residue 306-330 (DSGIRNGLDVVRMIALGADSVLLGR) participates in FMN binding.

The protein belongs to the FMN-dependent alpha-hydroxy acid dehydrogenase family. Requires FMN as cofactor.

The protein resides in the cell inner membrane. It catalyses the reaction (S)-lactate + A = pyruvate + AH2. Functionally, catalyzes the conversion of L-lactate to pyruvate. Is coupled to the respiratory chain. The sequence is that of L-lactate dehydrogenase from Klebsiella pneumoniae (strain 342).